A 475-amino-acid polypeptide reads, in one-letter code: Ribulose bisphosphate carboxylase large chain (475 aa).

Positions 1-2 (MS) are excised as a propeptide. Proline 3 carries the post-translational modification N-acetylproline. The residue at position 14 (lysine 14) is an N6,N6,N6-trimethyllysine. Asparagine 123 and threonine 173 together coordinate substrate. The Proton acceptor role is filled by lysine 175. Lysine 177 is a binding site for substrate. Residues lysine 201, aspartate 203, and glutamate 204 each contribute to the Mg(2+) site. Lysine 201 is modified (N6-carboxylysine). The active-site Proton acceptor is histidine 294. Substrate contacts are provided by arginine 295, histidine 327, and serine 379.

The protein belongs to the RuBisCO large chain family. Type I subfamily. As to quaternary structure, heterohexadecamer of 8 large chains and 8 small chains; disulfide-linked. The disulfide link is formed within the large subunit homodimers. Mg(2+) serves as cofactor. Post-translationally, the disulfide bond which can form in the large chain dimeric partners within the hexadecamer appears to be associated with oxidative stress and protein turnover.

The protein resides in the plastid. It is found in the chloroplast. It carries out the reaction 2 (2R)-3-phosphoglycerate + 2 H(+) = D-ribulose 1,5-bisphosphate + CO2 + H2O. The enzyme catalyses D-ribulose 1,5-bisphosphate + O2 = 2-phosphoglycolate + (2R)-3-phosphoglycerate + 2 H(+). Its function is as follows. RuBisCO catalyzes two reactions: the carboxylation of D-ribulose 1,5-bisphosphate, the primary event in carbon dioxide fixation, as well as the oxidative fragmentation of the pentose substrate in the photorespiration process. Both reactions occur simultaneously and in competition at the same active site. This Pinus balfouriana (Foxtail pine) protein is Ribulose bisphosphate carboxylase large chain.